A 300-amino-acid polypeptide reads, in one-letter code: Ribosomal protein L11 methyltransferase (300 aa).

Residues Thr-152, Gly-173, Asp-195, and Asn-234 each coordinate S-adenosyl-L-methionine.

This sequence belongs to the methyltransferase superfamily. PrmA family.

The protein localises to the cytoplasm. It catalyses the reaction L-lysyl-[protein] + 3 S-adenosyl-L-methionine = N(6),N(6),N(6)-trimethyl-L-lysyl-[protein] + 3 S-adenosyl-L-homocysteine + 3 H(+). In terms of biological role, methylates ribosomal protein L11. In Burkholderia multivorans (strain ATCC 17616 / 249), this protein is Ribosomal protein L11 methyltransferase.